The following is a 1649-amino-acid chain: Formin-like protein 20 (1649 aa).

The region spanning 1-194 (MALFRRFFYK…QYISRRNLGS (194 aa)) is the Phosphatase tensin-type domain. The active-site Phosphocysteine intermediate is C127. Positions 200–339 (DTPLLLDCLI…FKAEVLFSGA (140 aa)) constitute a C2 tensin-type domain. 2 disordered regions span residues 416–774 (DCAS…PWKS) and 787–1245 (STSQ…QKKS). The segment covering 421–483 (DSNHKHDMHA…RRTVEAKEND (63 aa)) has biased composition (basic and acidic residues). 2 stretches are compositionally biased toward polar residues: residues 500–513 (LESM…SLNK) and 585–597 (RINS…TTSL). Residues 598 to 616 (KDGKRATSPDGVIPKDAKT) show a composition bias toward basic and acidic residues. Over residues 648–662 (SLPPASPHQAPPPLP) the composition is skewed to pro residues. Over residues 665–678 (TSEAKTVLHSSQAV) the composition is skewed to polar residues. Composition is skewed to pro residues over residues 680–691 (SPPPPPPPPPLP), 701–711 (LPPPPPPPPPF), 722–732 (LPPPPPPPPPF), 743–752 (LPPPPPPPLP), and 795–804 (SPTPPPPPPA). A compositionally biased stretch (polar residues) spans 809–820 (GQKSSDLQTSQL). Pro residues-rich tracts occupy residues 821-832 (PSPPPPPPPPPF), 843-854 (LPPPPPPPPPPF), and 865-874 (LPPPPPPPPW). Positions 878 to 890 (YASTFETHEACST) are enriched in polar residues. Composition is skewed to pro residues over residues 893-904 (SPPPPPPPPPFS), 944-960 (PSPP…PPPF), and 968-1213 (SPPP…PPPM). Residues 1237-1635 (FGSAAQKKSS…KALKEAEMEK (399 aa)) enclose the FH2 domain.

Belongs to the formin-like family. Class-II subfamily.

This chain is Formin-like protein 20 (FH20), found in Arabidopsis thaliana (Mouse-ear cress).